A 66-amino-acid polypeptide reads, in one-letter code: Large ribosomal subunit protein uL29 (66 aa).

Belongs to the universal ribosomal protein uL29 family.

This chain is Large ribosomal subunit protein uL29, found in Kosmotoga olearia (strain ATCC BAA-1733 / DSM 21960 / TBF 19.5.1).